The primary structure comprises 355 residues: Tetraacyldisaccharide 4'-kinase (355 aa).

Residue 54 to 61 (TVGGAGKT) participates in ATP binding.

The protein belongs to the LpxK family.

It catalyses the reaction a lipid A disaccharide + ATP = a lipid IVA + ADP + H(+). Its pathway is glycolipid biosynthesis; lipid IV(A) biosynthesis; lipid IV(A) from (3R)-3-hydroxytetradecanoyl-[acyl-carrier-protein] and UDP-N-acetyl-alpha-D-glucosamine: step 6/6. Its function is as follows. Transfers the gamma-phosphate of ATP to the 4'-position of a tetraacyldisaccharide 1-phosphate intermediate (termed DS-1-P) to form tetraacyldisaccharide 1,4'-bis-phosphate (lipid IVA). This Rhizobium rhizogenes (strain K84 / ATCC BAA-868) (Agrobacterium radiobacter) protein is Tetraacyldisaccharide 4'-kinase.